Reading from the N-terminus, the 222-residue chain is Adapter protein MecA (222 aa).

It belongs to the MecA family. In terms of assembly, homodimer.

Enables the recognition and targeting of unfolded and aggregated proteins to the ClpC protease or to other proteins involved in proteolysis. The polypeptide is Adapter protein MecA (Lysinibacillus sphaericus (strain C3-41)).